We begin with the raw amino-acid sequence, 136 residues long: 6,7-dimethyl-8-ribityllumazine synthase (136 aa).

5-amino-6-(D-ribitylamino)uracil is bound by residues Phe11, 43–45 (VYD), and 67–69 (CVI). Residue 72–73 (DT) coordinates (2S)-2-hydroxy-3-oxobutyl phosphate. His75 (proton donor) is an active-site residue. A 5-amino-6-(D-ribitylamino)uracil-binding site is contributed by Leu100. Arg115 provides a ligand contact to (2S)-2-hydroxy-3-oxobutyl phosphate.

Belongs to the DMRL synthase family. In terms of assembly, forms an icosahedral capsid composed of 60 subunits, arranged as a dodecamer of pentamers.

It catalyses the reaction (2S)-2-hydroxy-3-oxobutyl phosphate + 5-amino-6-(D-ribitylamino)uracil = 6,7-dimethyl-8-(1-D-ribityl)lumazine + phosphate + 2 H2O + H(+). It participates in cofactor biosynthesis; riboflavin biosynthesis; riboflavin from 2-hydroxy-3-oxobutyl phosphate and 5-amino-6-(D-ribitylamino)uracil: step 1/2. Its function is as follows. Catalyzes the formation of 6,7-dimethyl-8-ribityllumazine by condensation of 5-amino-6-(D-ribitylamino)uracil with 3,4-dihydroxy-2-butanone 4-phosphate. This is the penultimate step in the biosynthesis of riboflavin. The protein is 6,7-dimethyl-8-ribityllumazine synthase of Methanococcus aeolicus (strain ATCC BAA-1280 / DSM 17508 / OCM 812 / Nankai-3).